We begin with the raw amino-acid sequence, 127 residues long: MNKLLLVAAGGAVGSVARYLVGVGAMRVMGPGWPYGTFTVNVVGGFLMGCLASWLAHRGNTSSETWRVMLGVGVLGGFTTFSSFSLETALMIQKRAYGQAFTYSAASVLLAIAALFAGLLVARKVFA.

4 helical membrane-spanning segments follow: residues 4–24 (LLLVAAGGAVGSVARYLVGVG), 36–56 (GTFTVNVVGGFLMGCLASWLA), 72–92 (VGVLGGFTTFSSFSLETALMI), and 101–121 (FTYSAASVLLAIAALFAGLLV). Na(+)-binding residues include Gly76 and Thr79.

Belongs to the fluoride channel Fluc/FEX (TC 1.A.43) family.

The protein resides in the cell inner membrane. The enzyme catalyses fluoride(in) = fluoride(out). Na(+) is not transported, but it plays an essential structural role and its presence is essential for fluoride channel function. Functionally, fluoride-specific ion channel. Important for reducing fluoride concentration in the cell, thus reducing its toxicity. This Caulobacter vibrioides (strain ATCC 19089 / CIP 103742 / CB 15) (Caulobacter crescentus) protein is Fluoride-specific ion channel FluC.